The chain runs to 283 residues: MAVPAFSDIAKSANDLLNKDFYHLAAGTIEVKSNTPNNVAFKVTGKSTHDKVTSGALEGKFTDKPNGLTVTQTWNTANALETKVEMADNLAKGLKAEGIFSFLPATNARGAKFNLHFKQSNFHGRAFFDLLKGPTANIDAIVGHEGFLAGASAGYDVQKAAITGYSAAVGYHAPTYSAAITATDNLSVFSASYYHKVNSQVEAGSKATWNSKTGNTVGLEVATKYRIDPVSFVKGKINDRGVAAIAYNVLLREGVTLGVGASFDTQKLDQATHKVGTSFTFES.

It belongs to the eukaryotic mitochondrial porin family.

It localises to the mitochondrion outer membrane. In terms of biological role, forms a channel through the cell membrane that allows diffusion of small hydrophilic molecules. The channel adopts an open conformation at low or zero membrane potential and a closed conformation at potentials above 30-40 mV. The open state has a weak anion selectivity whereas the closed state is cation-selective. The chain is Mitochondrial outer membrane protein porin from Neurospora crassa (strain ATCC 24698 / 74-OR23-1A / CBS 708.71 / DSM 1257 / FGSC 987).